A 307-amino-acid polypeptide reads, in one-letter code: Acetaldehyde dehydrogenase 1 (307 aa).

C131 serves as the catalytic Acyl-thioester intermediate. NAD(+)-binding positions include 162–170 (SIGPGTRKN) and N273.

The protein belongs to the acetaldehyde dehydrogenase family.

It catalyses the reaction acetaldehyde + NAD(+) + CoA = acetyl-CoA + NADH + H(+). This chain is Acetaldehyde dehydrogenase 1 (salG), found in Metapseudomonas furukawaii (Pseudomonas furukawaii).